The primary structure comprises 182 residues: ATP-dependent protease subunit HslV (182 aa).

Residue T10 is part of the active site. The Na(+) site is built by A166, C169, and S172.

Belongs to the peptidase T1B family. HslV subfamily. As to quaternary structure, a double ring-shaped homohexamer of HslV is capped on each side by a ring-shaped HslU homohexamer. The assembly of the HslU/HslV complex is dependent on binding of ATP.

The protein localises to the cytoplasm. It catalyses the reaction ATP-dependent cleavage of peptide bonds with broad specificity.. Its activity is regulated as follows. Allosterically activated by HslU binding. Its function is as follows. Protease subunit of a proteasome-like degradation complex believed to be a general protein degrading machinery. In Rickettsia felis (strain ATCC VR-1525 / URRWXCal2) (Rickettsia azadi), this protein is ATP-dependent protease subunit HslV.